A 355-amino-acid polypeptide reads, in one-letter code: Cell surface glycoprotein CD200 receptor 1 (355 aa).

The first 26 residues, 1–26, serve as a signal peptide directing secretion; the sequence is MPCTWITSDLQLRLILTLFFVAECLS. Over 27-267 the chain is Extracellular; sequence AGMEGTKTSN…QGAEIPAHLK (241 aa). Positions 35–55 are enriched in polar residues; sequence SNNSMQQLDNGNHSSVSTTSS. The segment at 35-56 is disordered; sequence SNNSMQQLDNGNHSSVSTTSST. Residues Asn-46, Asn-123, and Asn-153 are each glycosylated (N-linked (GlcNAc...) asparagine). Intrachain disulfides connect Cys-85-Cys-156, Cys-108-Cys-124, Cys-191-Cys-241, and Cys-210-Cys-229. The Ig-like C2-type domain maps to 139–257; sequence PALQVDPVAI…GNKSLSIQLS (119 aa). The helical transmembrane segment at 268 to 288 threads the bilayer; the sequence is NLYITAPIFIILIVVGSIWLL. At 289 to 355 the chain is on the cytoplasmic side; the sequence is KISGCRKCKL…NLHTIYVPRV (67 aa).

It belongs to the CD200R family. CD200 and CD200R1 interact via their respective N-terminal Ig-like domains.

It localises to the cell membrane. In terms of biological role, inhibitory receptor for the CD200/OX2 cell surface glycoprotein. Limits inflammation by inhibiting the expression of pro-inflammatory molecules including TNF-alpha, interferons, and inducible nitric oxide synthase (iNOS) in response to selected stimuli. In Bos taurus (Bovine), this protein is Cell surface glycoprotein CD200 receptor 1 (CD200R1).